Reading from the N-terminus, the 354-residue chain is Polyribonucleotide 5'-hydroxyl-kinase PF0112 (354 aa).

Residue G36 to T43 coordinates ATP.

A divalent metal cation is required as a cofactor.

It catalyses the reaction a 5'-end dephospho-2'-deoxyribonucleoside-DNA + ATP = a 5'-end 5'-phospho-2'-deoxyribonucleoside-DNA + ADP + H(+). It carries out the reaction a 5'-end dephospho-ribonucleoside-RNA + ATP = a 5'-end 5'-phospho-ribonucleoside-RNA + ADP + H(+). Polynucleotide kinase that can phosphorylate the 5'-hydroxyl groups of both single-stranded RNA (ssRNA) and single-stranded DNA (ssDNA). Exhibits a strong preference for ssRNA. The polypeptide is Polyribonucleotide 5'-hydroxyl-kinase PF0112 (Pyrococcus furiosus (strain ATCC 43587 / DSM 3638 / JCM 8422 / Vc1)).